The sequence spans 152 residues: Nucleoside diphosphate kinase (152 aa).

6 residues coordinate ATP: K11, F59, R87, T93, R104, and N114. H117 acts as the Pros-phosphohistidine intermediate in catalysis.

This sequence belongs to the NDK family. In terms of assembly, homotetramer. It depends on Mg(2+) as a cofactor.

The protein localises to the cytoplasm. It carries out the reaction a 2'-deoxyribonucleoside 5'-diphosphate + ATP = a 2'-deoxyribonucleoside 5'-triphosphate + ADP. It catalyses the reaction a ribonucleoside 5'-diphosphate + ATP = a ribonucleoside 5'-triphosphate + ADP. Major role in the synthesis of nucleoside triphosphates other than ATP. The ATP gamma phosphate is transferred to the NDP beta phosphate via a ping-pong mechanism, using a phosphorylated active-site intermediate. The protein is Nucleoside diphosphate kinase of Prochlorococcus marinus subsp. pastoris (strain CCMP1986 / NIES-2087 / MED4).